The primary structure comprises 227 residues: Ion-translocating oxidoreductase complex subunit E (227 aa).

The next 6 helical transmembrane spans lie at 18-38, 39-59, 69-89, 93-113, 125-145, and 182-202; these read ALVQ…VTNA, LGLG…VSLV, IPVF…LMNA, GLYL…IIIG, LPAV…LVLL, and HFLL…LIAL.

The protein belongs to the NqrDE/RnfAE family. As to quaternary structure, the complex is composed of six subunits: RnfA, RnfB, RnfC, RnfD, RnfE and RnfG.

It localises to the cell inner membrane. Functionally, part of a membrane-bound complex that couples electron transfer with translocation of ions across the membrane. This is Ion-translocating oxidoreductase complex subunit E from Aliivibrio fischeri (strain MJ11) (Vibrio fischeri).